We begin with the raw amino-acid sequence, 177 residues long: Large ribosomal subunit protein uL6 (177 aa).

The protein belongs to the universal ribosomal protein uL6 family. Part of the 50S ribosomal subunit.

In terms of biological role, this protein binds to the 23S rRNA, and is important in its secondary structure. It is located near the subunit interface in the base of the L7/L12 stalk, and near the tRNA binding site of the peptidyltransferase center. The polypeptide is Large ribosomal subunit protein uL6 (Rickettsia prowazekii (strain Madrid E)).